We begin with the raw amino-acid sequence, 175 residues long: Transcription factor HES-3 (175 aa).

A bHLH domain is found at 1–49 (MEKKRRARINVSLEQLRSLLERHYSHQIRKRKLEKADILELSVKYMRSL). Residues 65–98 (YPSGFQGGLRGVSQRLRPGEGDSGLRCPLLLQRR) enclose the Orange domain. The interval 126–166 (RAAGGSHSPQSPLPLPGGLLESSTDVVAPHPASNCQAESTR) is disordered. Low complexity predominate over residues 129–148 (GGSHSPQSPLPLPGGLLESS). Residues 172 to 175 (WRPW) carry the WRPW motif motif.

As to quaternary structure, transcription repression requires formation of a complex with a corepressor protein of the Groucho/TLE family.

The protein localises to the nucleus. Functionally, transcriptional repressor of genes that require a bHLH protein for their transcription. The polypeptide is Transcription factor HES-3 (Hes3) (Mus musculus (Mouse)).